The following is a 99-amino-acid chain: MVEEEQPISVDYEVFGKVQGVFFRKYTQAEGNRLGLVGWVRNTDAGTVTGQLQGPSEKVREMQVWLQKKGSPKSRITKVQFQNERRLPKLEHSTFSICK.

The Acylphosphatase-like domain maps to 9–99 (SVDYEVFGKV…LEHSTFSICK (91 aa)). Residues arginine 24 and asparagine 42 contribute to the active site.

This sequence belongs to the acylphosphatase family.

The catalysed reaction is an acyl phosphate + H2O = a carboxylate + phosphate + H(+). This is Acylphosphatase-1 (acyp1) from Xenopus laevis (African clawed frog).